Here is an 847-residue protein sequence, read N- to C-terminus: Alpha-glucuronidase (847 aa).

Positions 1-19 (MVIRSLLLLLLAAIVPVFA) are cleaved as a signal peptide. 8 N-linked (GlcNAc...) asparagine glycosylation sites follow: Asn-52, Asn-238, Asn-321, Asn-353, Asn-586, Asn-692, Asn-740, and Asn-767.

This sequence belongs to the glycosyl hydrolase 67 family.

It localises to the secreted. The catalysed reaction is an alpha-D-glucuronoside + H2O = D-glucuronate + an alcohol. Its function is as follows. Releases 4-O-methylglucuronic acid from xylan. This chain is Alpha-glucuronidase, found in Hypocrea jecorina (Trichoderma reesei).